The chain runs to 350 residues: Arabinogalactan endo-beta-1,4-galactanase A (350 aa).

An N-terminal signal peptide occupies residues 1 to 16 (MIYPLLLSALPLLSSA). The N-linked (GlcNAc...) asparagine glycan is linked to N128. E152 functions as the Proton donor in the catalytic mechanism. E262 (nucleophile) is an active-site residue.

This sequence belongs to the glycosyl hydrolase 53 family.

Its subcellular location is the secreted. It carries out the reaction The enzyme specifically hydrolyzes (1-&gt;4)-beta-D-galactosidic linkages in type I arabinogalactans.. Its function is as follows. Endogalactanase involved in the degradation of plant cell wall polysaccharides, and more particularly of hairy regions of pectin. The chain is Arabinogalactan endo-beta-1,4-galactanase A (galA) from Aspergillus niger.